Consider the following 88-residue polypeptide: Large ribosomal subunit protein bL27 (88 aa).

The segment at 1-23 (MAHKKAGGSSRNGRDSAGRRLGV) is disordered.

It belongs to the bacterial ribosomal protein bL27 family.

This is Large ribosomal subunit protein bL27 from Methylorubrum extorquens (strain CM4 / NCIMB 13688) (Methylobacterium extorquens).